Consider the following 199-residue polypeptide: HTH-type transcriptional repressor NemR (199 aa).

One can recognise an HTH tetR-type domain in the interval 7–67; sequence HDTREHLLAT…AMLERHYAAY (61 aa). Residues 30-49 constitute a DNA-binding region (H-T-H motif); it reads GLSELLKTAEVPKGSFYHYF.

Its function is as follows. Involved in response to both electrophiles and reactive chlorine species (RCS). Represses the transcription of the nemRA-gloA operon by binding to the NemR box. The polypeptide is HTH-type transcriptional repressor NemR (nemR) (Escherichia coli O6:H1 (strain CFT073 / ATCC 700928 / UPEC)).